Consider the following 369-residue polypeptide: Glycolate oxidase 1 (369 aa).

Residues 1-360 form the FMN hydroxy acid dehydrogenase domain; the sequence is MGEITNVMEY…TRKHIITESD (360 aa). Tyr25 contacts glyoxylate. Residues 78–80, Ser107, 128–130, and Thr156 contribute to the FMN site; these read PTA and QLY. Tyr130 is a glyoxylate binding site. Residue Arg165 coordinates glyoxylate. FMN-binding residues include Lys231 and Ser253. Residues His255 and Arg258 each contribute to the glyoxylate site. The active-site Proton acceptor is His255. FMN-binding positions include 286–290 and 309–310; these read DGGVR and GR.

This sequence belongs to the FMN-dependent alpha-hydroxy acid dehydrogenase family. As to quaternary structure, homotetramer. Requires FMN as cofactor.

The protein localises to the peroxisome. It carries out the reaction glycolate + O2 = glyoxylate + H2O2. It participates in photosynthesis; photorespiration; glycine from 2-phosphoglycolate: step 2/3. Catalyzes the oxidation of glycolate to glyoxylate, with a reduction of O2 to H2O2. Is an essential enzyme in photorespiration in plants. Photorespiration plays a vital role in C4 photosynthesis in Z.mays and is essential for maize seedling development and maintaining low (non-toxic) levels of glycolate. The protein is Glycolate oxidase 1 of Zea mays (Maize).